The sequence spans 363 residues: G-protein coupled receptor 6 (363 aa).

At 1–75 the chain is on the extracellular side; that stretch reads MNASAAALNE…SGLLLSAVNP (75 aa). 2 N-linked (GlcNAc...) asparagine glycosylation sites follow: Asn-2 and Asn-9. Residues 29–48 form a disordered region; sequence GAPDTGEWGPPAASAALGGG. Asn-52 carries an N-linked (GlcNAc...) asparagine glycan. A helical membrane pass occupies residues 76-95; that stretch reads WDVLLCVSGTVIAGENALVV. At 96 to 107 the chain is on the cytoplasmic side; it reads ALIASTPALRTP. A helical membrane pass occupies residues 108 to 131; sequence MFVLVGSLATADLLAGCGLILHFV. Topologically, residues 132 to 143 are extracellular; it reads FQYVVPSETVSL. Residues 144-165 traverse the membrane as a helical segment; it reads LMVGFLVASFAASVSSLLAITV. Topologically, residues 166-186 are cytoplasmic; the sequence is DRYLSLYNALTYYSRRTLLGV. A helical transmembrane segment spans residues 187 to 206; sequence HLLLAATWTVSLGLGLLPVL. Residues 207–231 are Extracellular-facing; that stretch reads GWNCLADRTSCSVVRPLTRSHVALL. The helical transmembrane segment at 232-250 threads the bilayer; it reads STSFFVVFGIMLHLYVRIC. Residues 251 to 278 are Cytoplasmic-facing; that stretch reads QVVWRHAHQIALQQHCLAPPHLAATRKG. A helical membrane pass occupies residues 279 to 305; that stretch reads VGTLAVVLGTFGASWLPFAIYCVVGSQ. The Extracellular portion of the chain corresponds to 306 to 310; the sequence is EDPAI. A helical transmembrane segment spans residues 311–332; it reads YTYATLLPATYNSMINPIIYAF. Residues 333 to 363 lie on the Cytoplasmic side of the membrane; sequence RNQEIQRALWLLFCGCFQSKVPFRSRSPSEV. A lipid anchor (S-palmitoyl cysteine) is attached at Cys-346. Ser-357, Ser-359, and Ser-361 each carry phosphoserine.

The protein belongs to the G-protein coupled receptor 1 family. As to expression, mainly expressed in the brain. Selectively expressed in striatopallidal neurons in the striatum.

The protein resides in the cell membrane. Orphan receptor with constitutive G(s) signaling activity that activate cyclic AMP. Promotes neurite outgrowth and blocks myelin inhibition in neurons. In Mus musculus (Mouse), this protein is G-protein coupled receptor 6 (Gpr6).